A 241-amino-acid chain; its full sequence is Transcription initiation factor TFIID subunit 14 (241 aa).

The YEATS domain maps to 1 to 137 (MTTVKRTVRL…PGLLKALTAT (137 aa)). The segment at 141–169 (PGYSDEGEEARKDKRKNESEVGAGKKKAK) is disordered. A compositionally biased stretch (basic and acidic residues) spans 149 to 159 (EARKDKRKNES).

The protein belongs to the TAF14 family. As to quaternary structure, component of the fcp1/TFIIF/polII complex via interaction of tfg3 with both tfg1/TFIIF-alpha and tfg2/TFIIF-beta subunits. Component of the SWI/SNF global transcription activator complex composed of at least arp9, arp42, snf5, snf22, snf30, sbf59, sol1, ssr1, ssr2, ssr3, ssr4 and tfg3. Also interacts with the TATA-binding protein (TBP). Component of the mst2 complex composed of at least eaf6, mst2, nto1, pdp3, ptf1, ptf2 and tfg3.

Its subcellular location is the nucleus. It localises to the nucleoplasm. Functions as a component of the DNA-binding general transcription factor complex TFIID, and the RNA polymerase II associated general transcription factor complex TFIIF. Binding of TFIID to a promoter (with or without TATA element) is the initial step in preinitiation complex (PIC) formation. TFIID plays a key role in the regulation of gene expression by RNA polymerase II through different activities such as transcription activator interaction, core promoter recognition and selectivity, TFIIA and TFIIB interaction, facilitation of DNA opening and initiation of transcription. TFIIF is essential for the initiation of transcription by RNA polymerase II. TFIIF functions include the recruitment of RNA polymerase II to the promoter bound DNA-TBP-TFIIB complex, decreasing the affinity of RNA polymerase II for non-specific DNA, allowing for the subsequent recruitment of TFIIE and TFIIH, and facilitating RNA polymerase II elongation. The TAF14 subunit has stimulatory activity. Component of the SWI/SNF complex, an ATP-dependent chromatin remodeling complex, required for the positive and negative regulation of gene expression of a large number of genes. It changes chromatin structure by altering DNA-histone contacts within a nucleosome, leading eventually to a change in nucleosome position, thus facilitating or repressing binding of gene-specific transcription factors. Component of the mst2 complex which is a highly specific H3 lysine 14 (H3K14) acetyltransferase that functions together with gcn5 to regulate global levels of H3K14 acetylation (H3K14ac), critical for DNA damage checkpoint activation. This Schizosaccharomyces pombe (strain 972 / ATCC 24843) (Fission yeast) protein is Transcription initiation factor TFIID subunit 14 (tfg3).